Consider the following 117-residue polypeptide: Immunoglobulin kappa variable 1-12 (117 aa).

The N-terminal stretch at M1–C22 is a signal peptide. The tract at residues D23–C45 is framework-1. The region spanning I24 to P117 is the Ig-like domain. The cysteines at positions 45 and 110 are disulfide-linked. Residues R46 to A56 form a complementarity-determining-1 region. The segment at W57–Y71 is framework-2. The tract at residues A72–S78 is complementarity-determining-2. Positions G79 to C110 are framework-3. Residues Q111–P117 form a complementarity-determining-3 region.

As to quaternary structure, immunoglobulins are composed of two identical heavy chains and two identical light chains; disulfide-linked.

Its subcellular location is the secreted. It localises to the cell membrane. Functionally, v region of the variable domain of immunoglobulin light chains that participates in the antigen recognition. Immunoglobulins, also known as antibodies, are membrane-bound or secreted glycoproteins produced by B lymphocytes. In the recognition phase of humoral immunity, the membrane-bound immunoglobulins serve as receptors which, upon binding of a specific antigen, trigger the clonal expansion and differentiation of B lymphocytes into immunoglobulins-secreting plasma cells. Secreted immunoglobulins mediate the effector phase of humoral immunity, which results in the elimination of bound antigens. The antigen binding site is formed by the variable domain of one heavy chain, together with that of its associated light chain. Thus, each immunoglobulin has two antigen binding sites with remarkable affinity for a particular antigen. The variable domains are assembled by a process called V-(D)-J rearrangement and can then be subjected to somatic hypermutations which, after exposure to antigen and selection, allow affinity maturation for a particular antigen. This is Immunoglobulin kappa variable 1-12 from Homo sapiens (Human).